The following is a 426-amino-acid chain: Synaptotagmin-13 (426 aa).

Over 1–6 (MVLSVP) the chain is Vesicular. A helical membrane pass occupies residues 7–29 (VIALGATLGTATSILALCGVTCL). Over 30 to 426 (CRHMHPKKGL…QIAMWHQLHL (397 aa)) the chain is Cytoplasmic. C2 domains follow at residues 158-275 (QAPK…AQWG) and 287-422 (GAGE…AMWH).

This sequence belongs to the synaptotagmin family. As to quaternary structure, interacts with NRXN1. Expressed in brain, heart, spleen, lung and testis.

The protein localises to the cytoplasmic vesicle membrane. In terms of biological role, may be involved in transport vesicle docking to the plasma membrane. The chain is Synaptotagmin-13 (Syt13) from Mus musculus (Mouse).